The primary structure comprises 226 residues: Glutathione S-transferase kappa 1 (226 aa).

16-18 (SPY) contributes to the glutathione binding site. 2 positions are modified to N6-succinyllysine: K36 and K49. N53 contributes to the glutathione binding site. An N6-acetyllysine; alternate mark is found at K68 and K74. K68 and K74 each carry N6-succinyllysine; alternate. K85 bears the N6-acetyllysine mark. N6-acetyllysine; alternate occurs at positions 93 and 116. An N6-succinyllysine; alternate mark is found at K93 and K116. K144 is modified (N6-succinyllysine). K158 carries the N6-acetyllysine; alternate modification. K158 carries the N6-succinyllysine; alternate modification. Position 165 is an N6-acetyllysine (K165). 2 positions are modified to N6-acetyllysine; alternate: K167 and K177. N6-succinyllysine; alternate is present on residues K167 and K177. Glutathione is bound at residue L183. K193 is subject to N6-succinyllysine. A glutathione-binding site is contributed by 200–201 (SD).

This sequence belongs to the GST superfamily. Kappa family. As to quaternary structure, homodimer.

It is found in the mitochondrion matrix. It carries out the reaction RX + glutathione = an S-substituted glutathione + a halide anion + H(+). Functionally, glutathione S-transferase that catalyzes the conjugation of glutathione to exogenous and endogenous compounds. This chain is Glutathione S-transferase kappa 1 (Gstk1), found in Rattus norvegicus (Rat).